Reading from the N-terminus, the 119-residue chain is Protein TusC (119 aa).

Belongs to the DsrF/TusC family. As to quaternary structure, heterohexamer, formed by a dimer of trimers. The hexameric TusBCD complex contains 2 copies each of TusB, TusC and TusD. The TusBCD complex interacts with TusE.

It is found in the cytoplasm. Its function is as follows. Part of a sulfur-relay system required for 2-thiolation of 5-methylaminomethyl-2-thiouridine (mnm(5)s(2)U) at tRNA wobble positions. The protein is Protein TusC of Pectobacterium atrosepticum (strain SCRI 1043 / ATCC BAA-672) (Erwinia carotovora subsp. atroseptica).